Consider the following 88-residue polypeptide: Small ribosomal subunit protein bS20 (88 aa).

Belongs to the bacterial ribosomal protein bS20 family.

Its function is as follows. Binds directly to 16S ribosomal RNA. This Bacillus licheniformis (strain ATCC 14580 / DSM 13 / JCM 2505 / CCUG 7422 / NBRC 12200 / NCIMB 9375 / NCTC 10341 / NRRL NRS-1264 / Gibson 46) protein is Small ribosomal subunit protein bS20.